Here is a 267-residue protein sequence, read N- to C-terminus: Dichloromethane dehalogenase (267 aa).

One can recognise a GST N-terminal domain in the interval 3 to 85 (TKLRYLHHPA…YLSEKYDCSS (83 aa)). Residues 91-224 (TLEERGHIQQ…AWQYENVRKY (134 aa)) enclose the GST C-terminal domain.

This sequence belongs to the GST superfamily. As to quaternary structure, homohexamer.

The protein localises to the cytoplasm. It carries out the reaction dichloromethane + H2O = formaldehyde + 2 chloride + 2 H(+). The protein operates within xenobiotic degradation; dichloromethane degradation. The sequence is that of Dichloromethane dehalogenase (dcmA) from Methylophilus leisingeri (strain DSM 6813 / VKM B-2013 / DM11).